Consider the following 538-residue polypeptide: Chaperonin GroEL (538 aa).

ATP contacts are provided by residues 29 to 32 (TLGP), 86 to 90 (DGTTT), Gly413, 476 to 478 (NAA), and Asp492.

This sequence belongs to the chaperonin (HSP60) family. As to quaternary structure, forms a cylinder of 14 subunits composed of two heptameric rings stacked back-to-back. Interacts with the co-chaperonin GroES.

Its subcellular location is the cytoplasm. It carries out the reaction ATP + H2O + a folded polypeptide = ADP + phosphate + an unfolded polypeptide.. Together with its co-chaperonin GroES, plays an essential role in assisting protein folding. The GroEL-GroES system forms a nano-cage that allows encapsulation of the non-native substrate proteins and provides a physical environment optimized to promote and accelerate protein folding. In Bacillus sp. (strain PS3), this protein is Chaperonin GroEL.